The chain runs to 290 residues: Diaminopimelate epimerase (290 aa).

The substrate site is built by Asn-14 and Asn-67. Cys-76 acts as the Proton donor in catalysis. Residues 77–78 (GN), Asn-166, Asn-199, and 217–218 (ER) each bind substrate. Residue Cys-226 is the Proton acceptor of the active site. Position 227 to 228 (227 to 228 (GT)) interacts with substrate.

The protein belongs to the diaminopimelate epimerase family. As to quaternary structure, homodimer.

Its subcellular location is the cytoplasm. It catalyses the reaction (2S,6S)-2,6-diaminopimelate = meso-2,6-diaminopimelate. The protein operates within amino-acid biosynthesis; L-lysine biosynthesis via DAP pathway; DL-2,6-diaminopimelate from LL-2,6-diaminopimelate: step 1/1. Catalyzes the stereoinversion of LL-2,6-diaminopimelate (L,L-DAP) to meso-diaminopimelate (meso-DAP), a precursor of L-lysine and an essential component of the bacterial peptidoglycan. This Geobacillus kaustophilus (strain HTA426) protein is Diaminopimelate epimerase.